The sequence spans 146 residues: Large ribosomal subunit protein uL22 (146 aa).

The disordered stretch occupies residues 1-39 (MAETQTTTPKKKAERRAPPPARARKNRPAAPAPGPHASL).

Belongs to the universal ribosomal protein uL22 family. Part of the 50S ribosomal subunit.

In terms of biological role, this protein binds specifically to 23S rRNA; its binding is stimulated by other ribosomal proteins, e.g. L4, L17, and L20. It is important during the early stages of 50S assembly. It makes multiple contacts with different domains of the 23S rRNA in the assembled 50S subunit and ribosome. The globular domain of the protein is located near the polypeptide exit tunnel on the outside of the subunit, while an extended beta-hairpin is found that lines the wall of the exit tunnel in the center of the 70S ribosome. The protein is Large ribosomal subunit protein uL22 of Anaeromyxobacter dehalogenans (strain 2CP-1 / ATCC BAA-258).